The primary structure comprises 229 residues: MNDHVIYTQSDVGLNQFFAKIYSLVGMGVGLSAFVSYLMLYPFRENLISILVNQPMIYYGAAIIELILVFVASSAARKNTPAALPIFLIYSALNGFTLSFIIVAYAQTTVFQAFLSSAAVFFAMSIIGVKTKRDMSGLRKAMFAALIGVVVASLINLFIGSGMMSYVISVISVLIFSGLIASDNQMIKRVYQATNGQVGDGWAVAMALSLYLDFINLFISLLRIFGRND.

The next 7 helical transmembrane spans lie at 21 to 41 (IYSLVGMGVGLSAFVSYLMLY), 56 to 76 (MIYYGAAIIELILVFVASSAA), 83 to 103 (ALPIFLIYSALNGFTLSFIIV), 109 to 129 (TVFQAFLSSAAVFFAMSIIGV), 141 to 161 (AMFAALIGVVVASLINLFIGS), 162 to 182 (GMMSYVISVISVLIFSGLIAS), and 202 to 222 (WAVAMALSLYLDFINLFISLL).

Belongs to the BI1 family.

It localises to the cell membrane. This is an uncharacterized protein from Streptococcus pyogenes serotype M1.